The chain runs to 2715 residues: G surface protein, allelic form 156 (2715 aa).

The signal sequence occupies residues 1–20 (MNNKFIIFSLLLALVASQTY). PSA repeat units follow at residues 111 to 171 (KTLD…NTCD), 177 to 237 (FATD…RICD), 243 to 303 (LTTD…KACA), 309 to 366 (IATN…KTCA), 372 to 404 (NNTH…APTT), 405 to 467 (MTTN…KTCV), 473 to 530 (NTTH…KQCV), 536 to 596 (TTTH…KACS), 602 to 673 (FTTT…KSCA), 688 to 748 (GFTF…KTCA), 752 to 812 (QTTH…ATCA), 820 to 895 (YDSD…GACT), 934 to 1001 (GLTF…AECA), 1008 to 1067 (GLDH…SNCA), 1073 to 1141 (GLTT…THCP), 1147 to 1215 (GLTD…TECA), 1221 to 1289 (GLTD…TECA), 1295 to 1363 (GLTN…TECA), 1369 to 1437 (GLTN…TECA), 1443 to 1507 (GLTK…LNCS), 1513 to 1578 (GFVH…TDCA), 1586 to 1652 (TITF…ATCD), 1693 to 1751 (TFNH…KTCD), 1759 to 1819 (RDDD…LNCG), 1827 to 1898 (YDTH…KSCT), 1904 to 1976 (TTTH…KSCA), 1984 to 2044 (YDDD…KSCD), 2080 to 2149 (FATD…KNCS), 2155 to 2215 (LTSE…KDCQ), 2219 to 2286 (GTTH…TSCK), 2290 to 2355 (WNND…TSCA), 2359 to 2430 (YTTH…QSCA), 2434 to 2500 (GTTH…LTCA), and 2505 to 2573 (GTAT…TACT).

It is found in the cell membrane. This protein is the surface antigen or immobilization antigen of Paramecium primaurelia. The sequence is that of G surface protein, allelic form 156 (156G) from Paramecium primaurelia.